We begin with the raw amino-acid sequence, 248 residues long: Glutathione S-transferase omega-2 (248 aa).

The region spanning 22 to 101 (GVIRIYSMRF…YLDDVYPGRK (80 aa)) is the GST N-terminal domain. C32 functions as the Nucleophile in the catalytic mechanism. Glutathione contacts are provided by residues K59, I72, and 85-86 (ES). Residues 106–231 (DPYERARQKM…VFLGFLNLYF (126 aa)) form the GST C-terminal domain.

The protein belongs to the GST superfamily. Omega family.

It carries out the reaction RX + glutathione = an S-substituted glutathione + a halide anion + H(+). The catalysed reaction is L-dehydroascorbate + 2 glutathione = glutathione disulfide + L-ascorbate. The enzyme catalyses methylarsonate + 2 glutathione + H(+) = methylarsonous acid + glutathione disulfide + H2O. In terms of biological role, exhibits glutathione-dependent thiol transferase activity. Has high dehydroascorbate reductase activity and may contribute to the recycling of ascorbic acid. Participates in the biotransformation of inorganic arsenic and reduces monomethylarsonic acid (MMA). The chain is Glutathione S-transferase omega-2 (Gsto2) from Mus musculus (Mouse).